We begin with the raw amino-acid sequence, 802 residues long: Leucine--tRNA ligase (802 aa).

Positions 40 to 51 (PYPSGAGLHVGH) match the 'HIGH' region motif. A 'KMSKS' region motif is present at residues 576 to 580 (KMSKS). An ATP-binding site is contributed by Lys579.

Belongs to the class-I aminoacyl-tRNA synthetase family.

The protein localises to the cytoplasm. It carries out the reaction tRNA(Leu) + L-leucine + ATP = L-leucyl-tRNA(Leu) + AMP + diphosphate. This Bacillus cereus (strain B4264) protein is Leucine--tRNA ligase.